The following is a 144-amino-acid chain: MDFGVQDIKNIIPHRYPFLLIDRVSYIEPGKKVVAYKNVTSNEYFFQGHFPEMPVMPGVLIIEALAQAGAVAILSQEEFKGKIAFFGAINKAKFRRNVVPGDTLKLEVEIIKIKGSAGIGKGTAYIGEKKAAEGELMFMIGDKN.

Residue His49 is part of the active site.

This sequence belongs to the thioester dehydratase family. FabZ subfamily.

It localises to the cytoplasm. It catalyses the reaction a (3R)-hydroxyacyl-[ACP] = a (2E)-enoyl-[ACP] + H2O. In terms of biological role, involved in unsaturated fatty acids biosynthesis. Catalyzes the dehydration of short chain beta-hydroxyacyl-ACPs and long chain saturated and unsaturated beta-hydroxyacyl-ACPs. The chain is 3-hydroxyacyl-[acyl-carrier-protein] dehydratase FabZ from Clostridium kluyveri (strain NBRC 12016).